Here is a 417-residue protein sequence, read N- to C-terminus: Exodeoxyribonuclease 7 large subunit (417 aa).

This sequence belongs to the XseA family. As to quaternary structure, heterooligomer composed of large and small subunits.

It localises to the cytoplasm. The catalysed reaction is Exonucleolytic cleavage in either 5'- to 3'- or 3'- to 5'-direction to yield nucleoside 5'-phosphates.. Bidirectionally degrades single-stranded DNA into large acid-insoluble oligonucleotides, which are then degraded further into small acid-soluble oligonucleotides. This Lactococcus lactis subsp. cremoris (strain MG1363) protein is Exodeoxyribonuclease 7 large subunit.